The primary structure comprises 218 residues: uncharacterized protein (218 aa).

Residues 111 to 193 enclose the Toprim domain; the sequence is NSIYLVEGDF…ITKVIEIKAA (83 aa).

This is an uncharacterized protein from Mycoplasma genitalium (strain ATCC 33530 / DSM 19775 / NCTC 10195 / G37) (Mycoplasmoides genitalium).